The chain runs to 651 residues: Histone-arginine methyltransferase CARM1 (651 aa).

The segment at 28–139 is interaction with C9orf72; sequence ATVSVFPGAR…GHTLERSVFS (112 aa). Residues 147-454 form the SAM-dependent MTase PRMT-type domain; the sequence is AVQYFQFYGY…KRQSYDISIV (308 aa). Residues Q160, R169, G193, and E215 each contribute to the S-adenosyl-L-methionine site. Position 217 is a phosphoserine (S217). K228 is covalently cross-linked (Glycyl lysine isopeptide (Lys-Gly) (interchain with G-Cter in ubiquitin)). 2 residues coordinate S-adenosyl-L-methionine: E244 and S272. Residues 347–380 are required for nuclear translocation; that stretch reads RILMAKSVKYTVNFLEAKEGDLHRIEIPFKFHML. A transactivation domain region spans residues 500-651; that stretch reads TGSTYNLSSG…IPTNTMHYGS (152 aa). R551 carries the post-translational modification Dimethylated arginine. The interval 581-617 is disordered; sequence RSSYQWGPGRLRGHAGSSVPMTCPTGSSGAQGGGGSS.

This sequence belongs to the class I-like SAM-binding methyltransferase superfamily. Protein arginine N-methyltransferase family. Homodimer. Interacts with NR1H4. Interacts with SNRPC. Interacts with the C-terminus of NCOA2/GRIP1, NCO3/ACTR and NCOA1/SRC1. Part of a complex consisting of CARM1, EP300/P300 and NCOA2/GRIP1. Interacts with FLII, TP53, myogenic factor MEF2, EP300/P300, TRIM24, CREBBP and CTNNB1. Interacts with RELA. Identified in a complex containing CARM1, TRIM24 and NCOA2/GRIP1. Interacts with NCOA3/SRC3. Interacts with SKP2. Interacts (via PH domain-like fold) with C9orf72. Interacts with PARP1; promoting PARP1 recruimtent to replication forks. Auto-methylated on Arg-551. Methylation enhances transcription coactivator activity. Methylation is required for its role in the regulation of pre-mRNA alternative splicing. Post-translationally, phosphorylation at Ser-217 interferes with S-adenosyl-L-methionine binding and strongly reduces methyltransferase activity. Phosphorylation at Ser-217 is strongly increased during mitosis, and decreases rapidly to a very low, basal level after entry into the G1 phase of the cell cycle. Phosphorylation at Ser-217 may promote location in the cytosol. In terms of processing, ubiquitinated by E3 ubiquitin-protein ligase complex containing FBXO9 at Lys-228; leading to proteasomal degradation. In terms of tissue distribution, isoform 1 is expressed at low levels in brain, liver and testis. Isoform 2 is highly expressed in brain, liver, skeletal muscle and testis. As to expression, isoform 3 is highly expressed in spleen, liver and kidney. In terms of tissue distribution, isoform 4 is expressed in spleen, liver and kidney.

The protein localises to the nucleus. It localises to the cytoplasm. Its subcellular location is the chromosome. It carries out the reaction L-arginyl-[protein] + 2 S-adenosyl-L-methionine = N(omega),N(omega)-dimethyl-L-arginyl-[protein] + 2 S-adenosyl-L-homocysteine + 2 H(+). Its activity is regulated as follows. Methylation of H3R17 (H3R17me) by CARM1 is stimulated by preacetylation of H3 'Lys-18' (H3K18ac) H3 'Lys-23' (H3K23ac) by EP300 and blocked by citrullination of H3 'Arg-17' (H3R17ci) by PADI4. Methylates (mono- and asymmetric dimethylation) the guanidino nitrogens of arginyl residues in several proteins involved in DNA packaging, transcription regulation, pre-mRNA splicing, and mRNA stability. Recruited to promoters upon gene activation together with histone acetyltransferases from EP300/P300 and p160 families, methylates histone H3 at 'Arg-17' (H3R17me), forming mainly asymmetric dimethylarginine (H3R17me2a), leading to activation of transcription via chromatin remodeling. During nuclear hormone receptor activation and TCF7L2/TCF4 activation, acts synergically with EP300/P300 and either one of the p160 histone acetyltransferases NCOA1/SRC1, NCOA2/GRIP1 and NCOA3/ACTR or CTNNB1/beta-catenin to activate transcription. During myogenic transcriptional activation, acts together with NCOA3/ACTR as a coactivator for MEF2C. During monocyte inflammatory stimulation, acts together with EP300/P300 as a coactivator for NF-kappa-B. Acts as a coactivator for PPARG, promotes adipocyte differentiation and the accumulation of brown fat tissue. Plays a role in the regulation of pre-mRNA alternative splicing by methylation of splicing factors. Also seems to be involved in p53/TP53 transcriptional activation. Methylates EP300/P300, both at 'Arg-2142', which may loosen its interaction with NCOA2/GRIP1, and at 'Arg-580' and 'Arg-604' in the KIX domain, which impairs its interaction with CREB and inhibits CREB-dependent transcriptional activation. Also methylates arginine residues in RNA-binding proteins PABPC1, ELAVL1 and ELAV4, which may affect their mRNA-stabilizing properties and the half-life of their target mRNAs. Acts as a transcriptional coactivator of ACACA/acetyl-CoA carboxylase by enriching H3R17 methylation at its promoter, thereby positively regulating fatty acid synthesis. Independently of its methyltransferase activity, involved in replication fork progression: promotes PARP1 recruitment to replication forks, leading to poly-ADP-ribosylation of chromatin at replication forks and reduced fork speed. Its function is as follows. Isoform 3 specifically affects pre-mRNA splicing. This activity is independent from methyltransferase activity. This is Histone-arginine methyltransferase CARM1 (Carm1) from Rattus norvegicus (Rat).